Here is a 201-residue protein sequence, read N- to C-terminus: 3-isopropylmalate dehydratase small subunit (201 aa).

It belongs to the LeuD family. LeuD type 1 subfamily. As to quaternary structure, heterodimer of LeuC and LeuD.

It catalyses the reaction (2R,3S)-3-isopropylmalate = (2S)-2-isopropylmalate. The protein operates within amino-acid biosynthesis; L-leucine biosynthesis; L-leucine from 3-methyl-2-oxobutanoate: step 2/4. Functionally, catalyzes the isomerization between 2-isopropylmalate and 3-isopropylmalate, via the formation of 2-isopropylmaleate. The polypeptide is 3-isopropylmalate dehydratase small subunit (Rhodopseudomonas palustris (strain ATCC BAA-98 / CGA009)).